A 251-amino-acid chain; its full sequence is GTP cyclohydrolase 1 type 2 homolog (251 aa).

A divalent metal cation contacts are provided by His63, His64, Asp101, His219, and Glu223.

The protein belongs to the GTP cyclohydrolase I type 2/NIF3 family. In terms of assembly, homohexamer.

In Pasteurella multocida (strain Pm70), this protein is GTP cyclohydrolase 1 type 2 homolog.